The chain runs to 457 residues: Vasoactive intestinal polypeptide receptor 1 (457 aa).

The signal sequence occupies residues 1 to 30; that stretch reads MRPPSPLPARWLCVLAGALAWALGPAGGQA. At 31–141 the chain is on the extracellular side; that stretch reads ARLQEECDYV…DEQQTMFYGS (111 aa). Disulfide bonds link Cys-37/Cys-208, Cys-50/Cys-72, Cys-63/Cys-105, Cys-86/Cys-122, and Cys-215/Cys-285. Asn-58, Asn-69, and Asn-100 each carry an N-linked (GlcNAc...) asparagine glycan. The helical transmembrane segment at 142-166 threads the bilayer; sequence VKTGYTIGYGLSLATLLVATAILSL. Residues 167-174 lie on the Cytoplasmic side of the membrane; it reads FRKLHCTR. Residues 175–196 form a helical membrane-spanning segment; sequence NYIHMHLFISFILRAAAVFIKD. The Extracellular segment spans residues 197–216; that stretch reads LALFDSGESDQCSEGSVGCK. Residues 217–241 traverse the membrane as a helical segment; the sequence is AAMVFFQYCVMANFFWLLVEGLYLY. Residues 242 to 254 are Cytoplasmic-facing; the sequence is TLLAVSFFSERKY. Residues 255–276 traverse the membrane as a helical segment; sequence FWGYILIGWGVPSTFTMVWTIA. At 277-291 the chain is on the extracellular side; sequence RIHFEDYGCWDTINS. The N-linked (GlcNAc...) asparagine glycan is linked to Asn-290. The chain crosses the membrane as a helical span at residues 292–316; the sequence is SLWWIIKGPILTSILVNFILFICII. The Cytoplasmic segment spans residues 317 to 338; that stretch reads RILLQKLRPPDIRKSDSSPYSR. A helical membrane pass occupies residues 339–359; that stretch reads LARSTLLLIPLFGVHYIMFAF. Topologically, residues 360–367 are extracellular; the sequence is FPDNFKPE. A helical membrane pass occupies residues 368–391; sequence VKMVFELVVGSFQGFVVAILYCFL. Residues 392–457 are Cytoplasmic-facing; it reads NGEVQAELRR…SSFQAEVSLV (66 aa).

This sequence belongs to the G-protein coupled receptor 2 family. Interacts with ADCYAP1/PACAP; activated by both PACAP27 and PACAP38 neuropeptides. Interacts with VIP; the interaction results in VIPR1 activation. As to expression, in lung, HT-29 colonic epithelial cells, Raji B-lymphoblasts. Lesser extent in brain, heart, kidney, liver and placenta. Not expressed in CD4+ or CD8+ T-cells. Expressed in the T-cell lines HARRIS, HuT 78, Jurkat and SUP-T1, but not in the T-cell lines Peer, MOLT-4, HSB and YT.

The protein localises to the cell membrane. G protein-coupled receptor activated by the neuropeptides vasoactive intestinal peptide (VIP) and pituitary adenylate cyclase-activating polypeptide (ADCYAP1/PACAP). Binds VIP and both PACAP27 and PACAP38 bioactive peptides with the following order of ligand affinity VIP = PACAP27 &gt; PACAP38. Ligand binding causes a conformation change that triggers signaling via guanine nucleotide-binding proteins (G proteins) and modulates the activity of downstream effectors. Activates cAMP-dependent pathway. In Homo sapiens (Human), this protein is Vasoactive intestinal polypeptide receptor 1.